The chain runs to 82 residues: Small ribosomal subunit protein bS16 (82 aa).

This sequence belongs to the bacterial ribosomal protein bS16 family.

The protein is Small ribosomal subunit protein bS16 of Sodalis glossinidius (strain morsitans).